We begin with the raw amino-acid sequence, 50 residues long: Large ribosomal subunit protein bL33B (50 aa).

The protein belongs to the bacterial ribosomal protein bL33 family.

The protein is Large ribosomal subunit protein bL33B of Ligilactobacillus salivarius (strain UCC118) (Lactobacillus salivarius).